Here is a 285-residue protein sequence, read N- to C-terminus: Ribosomal RNA small subunit methyltransferase I (285 aa).

Belongs to the methyltransferase superfamily. RsmI family.

It localises to the cytoplasm. It catalyses the reaction cytidine(1402) in 16S rRNA + S-adenosyl-L-methionine = 2'-O-methylcytidine(1402) in 16S rRNA + S-adenosyl-L-homocysteine + H(+). In terms of biological role, catalyzes the 2'-O-methylation of the ribose of cytidine 1402 (C1402) in 16S rRNA. This Buchnera aphidicola subsp. Schizaphis graminum (strain Sg) protein is Ribosomal RNA small subunit methyltransferase I.